The primary structure comprises 592 residues: A-type ATP synthase subunit A (592 aa).

234 to 241 (GAFGTGKT) provides a ligand contact to ATP.

It belongs to the ATPase alpha/beta chains family. As to quaternary structure, has multiple subunits with at least A(3), B(3), C, D, E, F, H, I and proteolipid K(x).

The protein localises to the cell membrane. It carries out the reaction ATP + H2O + 4 H(+)(in) = ADP + phosphate + 5 H(+)(out). Its function is as follows. Component of the A-type ATP synthase that produces ATP from ADP in the presence of a proton gradient across the membrane. The A chain is the catalytic subunit. The protein is A-type ATP synthase subunit A of Nitrosopumilus maritimus (strain SCM1).